We begin with the raw amino-acid sequence, 1251 residues long: Immunoglobulin-like and fibronectin type III domain-containing protein 1 (1251 aa).

In terms of domain architecture, Ig-like 1 spans 29–119 (PDFEQKPVTS…GEAACSVRLT (91 aa)). The tract at residues 61-81 (RWQNSKGDLSDSSKYKISSSP) is disordered. Residues 188 to 221 (IVDYRGMLRRLQEMKKEQEDKMAQYINTISSLRH) are a coiled coil. An Ig-like 2 domain is found at 309-398 (PRVVVPLAET…SSAWLVVEAG (90 aa)). Residues 403-433 (LQSTSADHKLQSRRSGKDGRLDIYGERRDAT) show a composition bias toward basic and acidic residues. The segment at 403–454 (LQSTSADHKLQSRRSGKDGRLDIYGERRDATRSSTSRYKPGTGSFSKDAQGP) is disordered. Positions 434–449 (RSSTSRYKPGTGSFSK) are enriched in polar residues. Residues 454 to 539 (PMGHFSQGLA…GDQQSEATLT (86 aa)) enclose the Ig-like 3 domain. Fibronectin type-III domains are found at residues 646–741 (PPQG…VAPE), 746–845 (APSA…MRPP), and 847–942 (LVRN…AMPV). In terms of domain architecture, Ig-like 4 spans 946 to 1030 (PKFLVDSSTK…LRTLQGKEVA (85 aa)). The Fibronectin type-III 4 domain occupies 1043 to 1137 (APGPIHLQEN…TSQPWCIPRQ (95 aa)). Residues 1151 to 1245 (PDLSQKPRFL…GQAVSTATLI (95 aa)) enclose the Ig-like 5 domain.

Interacts with FLNC. Interacts with KY. Expressed in skeletal muscle.

The protein localises to the nucleus. It localises to the cytoplasm. The protein resides in the myofibril. Its subcellular location is the sarcomere. It is found in the z line. The protein is Immunoglobulin-like and fibronectin type III domain-containing protein 1 (IGFN1) of Homo sapiens (Human).